We begin with the raw amino-acid sequence, 245 residues long: Probable phosphatase YE2421 (245 aa).

Zn(2+) contacts are provided by histidine 7, histidine 9, histidine 15, histidine 40, glutamate 73, histidine 101, histidine 131, aspartate 192, and histidine 194.

This sequence belongs to the PHP family. As to quaternary structure, homotrimer. Zn(2+) serves as cofactor.

This Yersinia enterocolitica serotype O:8 / biotype 1B (strain NCTC 13174 / 8081) protein is Probable phosphatase YE2421.